The primary structure comprises 372 residues: Alginate lyase (372 aa).

The first 22 residues, Met-1–Ala-22, serve as a signal peptide directing secretion. Residues Ser-61–Lys-62, His-134–Thr-135, and Tyr-252 each bind substrate.

Belongs to the polysaccharide lyase 5 family.

Its subcellular location is the periplasm. It catalyses the reaction Eliminative cleavage of alginate to give oligosaccharides with 4-deoxy-alpha-L-erythro-hex-4-enuronosyl groups at their non-reducing ends and beta-D-mannuronate at their reducing end.. Monovalent cations such as potassium and sodium enhance activity, as well as a combined action of these cations with magnesium. However, other cations like calcium, cobalt, manganese and zinc, or the presence of EDTA, do not affect the enzymatic activity. In terms of biological role, catalyzes the depolymerization of alginate by cleaving the beta-1,4 glycosidic bond between two adjacent sugar residues via a beta-elimination mechanism. Degrades deacetylated polymannuronate alginate more efficiently than non-deacetylated polyM. Is able to degrade its own alginate, but at a lower efficiency than that produced from M.pyriferia and P.aeruginosa. May serve to degrade mislocalized alginate that is trapped in the periplasmic space. The polypeptide is Alginate lyase (Azotobacter chroococcum mcd 1).